Reading from the N-terminus, the 122-residue chain is Large ribosomal subunit protein uL14 (122 aa).

It belongs to the universal ribosomal protein uL14 family. In terms of assembly, part of the 50S ribosomal subunit. Forms a cluster with proteins L3 and L19. In the 70S ribosome, L14 and L19 interact and together make contacts with the 16S rRNA in bridges B5 and B8.

Binds to 23S rRNA. Forms part of two intersubunit bridges in the 70S ribosome. The chain is Large ribosomal subunit protein uL14 from Gluconacetobacter diazotrophicus (strain ATCC 49037 / DSM 5601 / CCUG 37298 / CIP 103539 / LMG 7603 / PAl5).